A 345-amino-acid polypeptide reads, in one-letter code: uncharacterized protein (345 aa).

This is an uncharacterized protein from Acidianus filamentous virus 2 (isolate Italy/Pozzuoli) (AFV-2).